Here is a 486-residue protein sequence, read N- to C-terminus: Ty transcription activator TEC1 (486 aa).

An N-acetylserine modification is found at Ser2. A DNA-binding region (TEA) is located at residues 125-199; sequence WTIGCDKWSE…QVWKKTIQNK (75 aa). The residue at position 325 (Ser325) is a Phosphoserine. 2 disordered regions span residues 372-410 and 465-486; these read EHESNPEFSSNSNSGSEYESEEEVVPRSATVTQLQSRPV and HYEHSPHQRNFTPSNQSHGNFY. Low complexity predominate over residues 377-388; it reads PEFSSNSNSGSE. Over residues 472–486 the composition is skewed to polar residues; sequence QRNFTPSNQSHGNFY.

This sequence belongs to the TEC1 family.

The protein localises to the nucleus. TEC1 is involved in the activation of TY1 and TY1-mediated gene expression. It is not involved in mating or sporulation processes. This Saccharomyces cerevisiae (strain ATCC 204508 / S288c) (Baker's yeast) protein is Ty transcription activator TEC1 (TEC1).